Here is a 284-residue protein sequence, read N- to C-terminus: Tropomyosin (284 aa).

Positions 1-284 (MDAIKKKMQA…DQTFQELFGY (284 aa)) form a coiled coil. A compositionally biased stretch (basic and acidic residues) spans 113–142 (LEKATHTADESDRVRKVMENRSFQDEERAN). A disordered region spans residues 113-143 (LEKATHTADESDRVRKVMENRSFQDEERANT).

Belongs to the tropomyosin family.

Its function is as follows. Tropomyosin, in association with the troponin complex, plays a central role in the calcium dependent regulation of muscle contraction. The polypeptide is Tropomyosin (Acanthocheilonema viteae (Filarial nematode worm)).